We begin with the raw amino-acid sequence, 919 residues long: MSHHVPNLYGTPIRDPHERKRNSASMGEVNQSVSSRNCERGSEKGTKQRKKASRACDQCRRKRIKCRFDKHTGVCQGCLEVGEKCQFIRVPLKRGPAKKRASVVSIEKFSSDNDPLQYRPRTHSYPMNSGNNYLPSLARNSSFPSISSLFVPSITAQSQQFVKVPYDDIKRRSSLATLGSDSSISTEFGGNYRLDENLNVRQEGKDIVAKGMITPVEEMGACSSNVRRQGSQSLPIQEQRASPYINPFISGRSRLSSLSYTSEATTSEGNTQGKNQCMLTPNSVRSIEKERLNSLTAGCPNKKLGTDGRSDKWDKNSTWKPVYRSSNPSHPSTEKNVSLNQEASAKPLMLGTYRQFDATSFYKVLGIYYNFFHINFPVIPINKSKFTDMLDPEKPNVIDEIRQINNEIIQCFKTALEVLVFCKIKQRRSSKSTKSWSRDSLCDFQKGLYYIQNFNKCIADCFQSLITIKPVLKQNSSVIPSRIKFIYFSTIIVLNFILILAGEESSLLLGPSVGVFNEFQAHKLFLPFENTSPMLLLNSNEESGDEILDYAVLFKRLYILLNILDTLQSFRLGQPKLINLNFGSAIETYFSDKTGHNQVVEKAPVALDNILRNLKLGEFITYFVLNRKSLQVNVPHHLLFTNQTDYGEFAVEKGEHDNIAGKFETLLKKKEILIRKLLNIEQKNDHILENCCNSDAEMKNIGELVCSMITLVSGILDSITNMNAENSVDLDSKPLPNAYFAQDSEEELMSPTQSITSNLASEENTRCTTKDLMGTVSIFMLPMVEECYNIISLIGPIPTTLISLYIRNGNMAKGINDRIMTLSTALNELVQITALFNTLEPFRKNAHDRAKRYYVSATSSTGCYESVMKSMYSGKCAASNASNVAPSEEENKKILKKFADIGWKLMDDSELGCCCCFFN.

A disordered region spans residues 1–54; the sequence is MSHHVPNLYGTPIRDPHERKRNSASMGEVNQSVSSRNCERGSEKGTKQRKKASR. Residues 23 to 36 are compositionally biased toward polar residues; sequence SASMGEVNQSVSSR. Residues 37-46 are compositionally biased toward basic and acidic residues; sequence NCERGSEKGT. The segment at residues 56-85 is a DNA-binding region (zn(2)-C6 fungal-type); it reads CDQCRRKRIKCRFDKHTGVCQGCLEVGEKC. The interval 297–338 is disordered; that stretch reads AGCPNKKLGTDGRSDKWDKNSTWKPVYRSSNPSHPSTEKNVS. The segment covering 304–317 has biased composition (basic and acidic residues); it reads LGTDGRSDKWDKNS. Over residues 318 to 338 the composition is skewed to polar residues; the sequence is TWKPVYRSSNPSHPSTEKNVS.

In terms of assembly, binds DNA in a sequence-specific manner.

The protein resides in the nucleus. The protein is Transcriptional regulatory protein EDS1 (EDS1) of Saccharomyces cerevisiae (strain RM11-1a) (Baker's yeast).